The primary structure comprises 469 residues: ATP-dependent protease ATPase subunit HslU (469 aa).

ATP-binding positions include Ile-21, 63–68 (GVGKTE), Asp-282, Glu-347, and Arg-419.

Belongs to the ClpX chaperone family. HslU subfamily. As to quaternary structure, a double ring-shaped homohexamer of HslV is capped on each side by a ring-shaped HslU homohexamer. The assembly of the HslU/HslV complex is dependent on binding of ATP.

It localises to the cytoplasm. ATPase subunit of a proteasome-like degradation complex; this subunit has chaperone activity. The binding of ATP and its subsequent hydrolysis by HslU are essential for unfolding of protein substrates subsequently hydrolyzed by HslV. HslU recognizes the N-terminal part of its protein substrates and unfolds these before they are guided to HslV for hydrolysis. This is ATP-dependent protease ATPase subunit HslU from Petrotoga mobilis (strain DSM 10674 / SJ95).